The following is a 186-amino-acid chain: Lumazine protein (186 aa).

Lumazine-binding repeat units follow at residues 1–96 (MFRG…VGRG) and 97–186 (GLTG…LNEW).

6,7-dimethyl-8-(1-D-ribityl)lumazine is required as a cofactor.

Its function is as follows. Antenna protein that modulates the color of the bioluminescence emission of the luciferase. In the presence of LumP, luciferase emission is shifted to higher energy values (shorter wavelength). The sequence is that of Lumazine protein (lumP) from Photobacterium leiognathi.